Here is a 557-residue protein sequence, read N- to C-terminus: Interferon alpha/beta receptor 1 (557 aa).

An N-terminal signal peptide occupies residues 1–27; the sequence is MMVVLLGATTLVLVAVAPWVLSAAAGG. At 28–436 the chain is on the extracellular side; that stretch reads KNLKSPQKVE…EKTKPGNTSK (409 aa). Fibronectin type-III domains lie at 32–126, 127–227, 231–329, and 331–432; these read SPQK…FRKA, QIGP…TVEN, PPEN…TEIQ, and FLLP…TKPG. Residues Asn-50, Asn-58, Asn-81, Asn-88, Asn-110, and Asn-172 are each glycosylated (N-linked (GlcNAc...) asparagine). An intrachain disulfide couples Cys-79 to Cys-87. Cysteines 199 and 220 form a disulfide. Residue Asn-254 is glycosylated (N-linked (GlcNAc...) asparagine). Cys-283 and Cys-291 are disulfide-bonded. N-linked (GlcNAc...) asparagine glycosylation is found at Asn-313, Asn-314, Asn-376, Asn-416, and Asn-433. A disulfide bond links Cys-403 and Cys-426. The chain crosses the membrane as a helical span at residues 437–457; the sequence is IWLIVGICIALFALPFVIYAA. At 458–557 the chain is on the cytoplasmic side; that stretch reads KVFLRCINYV…TSEELQQDFV (100 aa). Cys-463 carries S-palmitoyl cysteine lipidation. Residues Tyr-466 and Tyr-481 each carry the phosphotyrosine; by TYK2 modification. Residues 491–500 form an important for interaction with TYK2 region; it reads LLSTSEEQIE. Ser-495 is subject to Phosphoserine. Residues Lys-501, Lys-525, and Lys-526 each participate in a glycyl lysine isopeptide (Lys-Gly) (interchain with G-Cter in ubiquitin) cross-link. The interval 516-557 is disordered; sequence ETNQTDEDHKKYSSQTSQDSGNYSNEDESESKTSEELQQDFV. The segment covering 528-539 has biased composition (polar residues); it reads SSQTSQDSGNYS. At Ser-535 the chain carries Phosphoserine.

It belongs to the type II cytokine receptor family. As to quaternary structure, heterodimer with IFNAR2; forming the receptor for type I interferon. Interacts with TYK2. Interacts with STAT1 and STAT2; the interaction requires its phosphorylation at Tyr-466. Interacts (serine-phosphorylated form) with FBXW11, the substrate recognition component of a SCF (SKP1-CUL1-F-box protein) E3 ubiquitin-protein ligase complex. Interacts with SHMT2; this promotes interaction with ABRAXAS2 and the BRISC complex. Interacts with TRIM10; this interaction prevents association between IFNAR1 and TYK2. In terms of processing, ubiquitinated, leading to its internalization and degradation. Polyubiquitinated via 'Lys-48'-linked and 'Lys-63'-linked ubiquitin chains, leading to receptor internalization and lysosomal degradation. The 'Lys-63'-linked ubiquitin chains are cleaved off by the BRISC complex. Post-translationally, phosphorylated on tyrosine residues in response to interferon-binding: phosphorylation by TYK2 tyrosine kinase creates docking sites for STAT proteins. Phosphorylated on serine residues in response to interferon binding; this promotes interaction with FBXW11 and ubiquitination. Palmitoylation at Cys-463 is required for the activation of STAT1 and STAT2. IFN receptors are present in all tissues and even on the surface of most IFN-resistant cells. Isoform 1, isoform 2 and isoform 3 are expressed in the IFN-alpha sensitive myeloma cell line U266B1. Isoform 2 and isoform 3 are expressed in the IFN-alpha resistant myeloma cell line U266R. Isoform 1 is not expressed in IFN-alpha resistant myeloma cell line U266R.

The protein resides in the cell membrane. The protein localises to the late endosome. It localises to the lysosome. Together with IFNAR2, forms the heterodimeric receptor for type I interferons (including interferons alpha, beta, epsilon, omega and kappa). Type I interferon binding activates the JAK-STAT signaling cascade, resulting in transcriptional activation or repression of interferon-regulated genes that encode the effectors of the interferon response. Mechanistically, type I interferon-binding brings the IFNAR1 and IFNAR2 subunits into close proximity with one another, driving their associated Janus kinases (JAKs) (TYK2 bound to IFNAR1 and JAK1 bound to IFNAR2) to cross-phosphorylate one another. The activated kinases phosphorylate specific tyrosine residues on the intracellular domains of IFNAR1 and IFNAR2, forming docking sites for the STAT transcription factors. STAT proteins are then phosphorylated by the JAKs, promoting their translocation into the nucleus to regulate expression of interferon-regulated genes. Can also act independently of IFNAR2: form an active IFNB1 receptor by itself and activate a signaling cascade that does not involve activation of the JAK-STAT pathway. This is Interferon alpha/beta receptor 1 (IFNAR1) from Homo sapiens (Human).